Here is a 412-residue protein sequence, read N- to C-terminus: Ribosomal RNA large subunit methyltransferase G (412 aa).

A disordered region spans residues 386-412 (KAEPHENGESSSDTPNPQSSLYGGVKR). Over residues 394-406 (ESSSDTPNPQSSL) the composition is skewed to polar residues.

This sequence belongs to the methyltransferase superfamily. RlmG family.

It is found in the cytoplasm. The enzyme catalyses guanosine(1835) in 23S rRNA + S-adenosyl-L-methionine = N(2)-methylguanosine(1835) in 23S rRNA + S-adenosyl-L-homocysteine + H(+). In terms of biological role, specifically methylates the guanine in position 1835 (m2G1835) of 23S rRNA. This Shewanella sediminis (strain HAW-EB3) protein is Ribosomal RNA large subunit methyltransferase G.